The primary structure comprises 297 residues: Nucleotide-binding protein BURPS668_0577 (297 aa).

ATP is bound at residue 8–15 (GISGSGKS). 57-60 (DARS) contributes to the GTP binding site.

The protein belongs to the RapZ-like family.

Functionally, displays ATPase and GTPase activities. The chain is Nucleotide-binding protein BURPS668_0577 from Burkholderia pseudomallei (strain 668).